The sequence spans 87 residues: Small ribosomal subunit protein bS20 (87 aa).

The segment at 1-26 (MANIKSAKKRAIQSEKRRKHNASRRS) is disordered.

The protein belongs to the bacterial ribosomal protein bS20 family.

In terms of biological role, binds directly to 16S ribosomal RNA. The polypeptide is Small ribosomal subunit protein bS20 (Photorhabdus laumondii subsp. laumondii (strain DSM 15139 / CIP 105565 / TT01) (Photorhabdus luminescens subsp. laumondii)).